The sequence spans 154 residues: 17 kDa surface antigen (154 aa).

The N-terminal stretch at 1-19 (MKLLSKIMIIALAASMLQA) is a signal peptide. Cys20 carries the N-palmitoyl cysteine lipid modification. Cys20 carries S-diacylglycerol cysteine lipidation.

It belongs to the rickettsiale 17 kDa surface antigen family.

The protein localises to the cell outer membrane. This chain is 17 kDa surface antigen (omp), found in Rickettsia rhipicephali.